A 286-amino-acid polypeptide reads, in one-letter code: CCR4-NOT transcription complex subunit 7 (286 aa).

A divalent metal cation-binding residues include Asp40, Glu42, Asp161, Asp230, and Glu278.

Belongs to the CAF1 family. Component of the CCR4-NOT complex. It depends on Mn(2+) as a cofactor. Requires Mg(2+) as cofactor. Co(2+) is required as a cofactor.

The protein localises to the nucleus. The protein resides in the cytoplasm. It catalyses the reaction Exonucleolytic cleavage of poly(A) to 5'-AMP.. Functionally, has 3'-5' poly(A) exoribonuclease activity for synthetic poly(A) RNA substrate. Catalytic component of the CCR4-NOT complex which is one of the major cellular mRNA deadenylases and is linked to various cellular processes including bulk mRNA degradation, miRNA-mediated repression, translational repression during translational initiation and general transcription regulation. During miRNA-mediated repression the complex also seems to act as translational repressor during translational initiation. Additional complex functions may be a consequence of its influence on mRNA expression. In Danio rerio (Zebrafish), this protein is CCR4-NOT transcription complex subunit 7 (cnot7).